A 401-amino-acid polypeptide reads, in one-letter code: 8-amino-7-oxononanoate synthase (401 aa).

R19 contributes to the substrate binding site. 106-107 (GY) lines the pyridoxal 5'-phosphate pocket. A substrate-binding site is contributed by H131. Positions 176, 204, and 233 each coordinate pyridoxal 5'-phosphate. Residue K236 is modified to N6-(pyridoxal phosphate)lysine. T350 contacts substrate.

Belongs to the class-II pyridoxal-phosphate-dependent aminotransferase family. BioF subfamily. As to quaternary structure, homodimer. Requires pyridoxal 5'-phosphate as cofactor.

The enzyme catalyses 6-carboxyhexanoyl-[ACP] + L-alanine + H(+) = (8S)-8-amino-7-oxononanoate + holo-[ACP] + CO2. It functions in the pathway cofactor biosynthesis; biotin biosynthesis. In terms of biological role, catalyzes the decarboxylative condensation of pimeloyl-[acyl-carrier protein] and L-alanine to produce 8-amino-7-oxononanoate (AON), [acyl-carrier protein], and carbon dioxide. The protein is 8-amino-7-oxononanoate synthase of Pseudomonas aeruginosa (strain ATCC 15692 / DSM 22644 / CIP 104116 / JCM 14847 / LMG 12228 / 1C / PRS 101 / PAO1).